Reading from the N-terminus, the 105-residue chain is Urease subunit beta (105 aa).

This sequence belongs to the urease beta subunit family. In terms of assembly, heterotrimer of UreA (gamma), UreB (beta) and UreC (alpha) subunits. Three heterotrimers associate to form the active enzyme.

It is found in the cytoplasm. The catalysed reaction is urea + 2 H2O + H(+) = hydrogencarbonate + 2 NH4(+). It functions in the pathway nitrogen metabolism; urea degradation; CO(2) and NH(3) from urea (urease route): step 1/1. In Marinomonas sp. (strain MWYL1), this protein is Urease subunit beta.